The following is a 214-amino-acid chain: ATP synthase subunit 5, mitochondrial (214 aa).

A mitochondrion-targeting transit peptide spans 1–24; the sequence is MFASRAIRMMSMRPMARTMATKAA.

In terms of assembly, F-type ATP synthases have 2 components, the catalytic core F(1) and the membrane-embedded component F(0), linked together by a central stalk and a peripheral stalk. The central stalk, also called rotor shaft, is often seen as part of F(1). The peripheral stalk is seen as part of F(0). F(0) contains the membrane channel next to the rotor. F-type ATP synthases form dimers but each monomer functions independently in ATP generation. The dimer consists of 17 different polypeptides: ATP1 (subunit alpha, 3 molecules per monomer, part of F(1)), ATP2 (subunit beta, 3 copies per monomer, part of F(1)), ATP3 (subunit gamma, part of the central stalk), ATP4 (subunit b, part of the peripheral stalk), ATP5/OSCP (subunit 5/OSCP, part of the peripheral stalk), ATP6 (subunit a, part of the peripheral stalk), ATP7 (subunit d, part of the peripheral stalk), ATP8 (subunit 8, part of the peripheral stalk), OLI1 (subunit c, part of the rotor, 10 molecules per monomer), ATP14 (subunit h, part of the peripheral stalk), ATP15 (subunit epsilon, part of the central stalk), ATP16 (subunit delta, part of the central stalk), ATP17 (subunit f, part of the peripheral stalk), ATP18 (subunit i/j, part of the peripheral stalk), ATP19 (subunit k, dimer-specific, at interface between monomers), ATP20 (subunit g, at interface between monomers), TIM11 (subunit e, at interface between monomers).

The protein localises to the mitochondrion inner membrane. In terms of biological role, mitochondrial membrane ATP synthase (F(1)F(0) ATP synthase or Complex V) produces ATP from ADP in the presence of a proton gradient across the membrane which is generated by electron transport complexes of the respiratory chain. F-type ATP synthases consist of two structural domains, F(1) - containing the extramembraneous catalytic core, and F(0) - containing the membrane proton channel, linked together by a central stalk and a peripheral stalk. During catalysis, ATP synthesis in the catalytic domain of F(1) is coupled via a rotary mechanism of the central stalk subunits to proton translocation. Part of the complex F(0) domain and the peripheral stalk, which acts as a stator to hold the catalytic alpha/ATP1(3)beta/ATP2(3) subcomplex and subunit a/ATP6 static relative to the rotary elements. This is ATP synthase subunit 5, mitochondrial from Yarrowia lipolytica (strain CLIB 122 / E 150) (Yeast).